A 1042-amino-acid polypeptide reads, in one-letter code: Signal-induced proliferation-associated protein 1 (1042 aa).

Disordered stretches follow at residues 1–87 (MPMW…TSTR) and 132–153 (SQGMGSHSEASSGTLASAEDQA). A Phosphothreonine modification is found at threonine 64. At serine 67 the chain carries Phosphoserine. A compositionally biased stretch (polar residues) spans 134–146 (GMGSHSEASSGTL). Serine 182, serine 304, and serine 314 each carry phosphoserine. In terms of domain architecture, Rap-GAP spans 321-539 (LLTLDEQVLS…RTRQQYLQDL (219 aa)). One can recognise a PDZ domain in the interval 687–763 (ELALPRDGQG…VCVTVLPPDE (77 aa)). 3 positions are modified to phosphoserine: serine 817, serine 839, and serine 912. Positions 830–903 (EFLHSQNSLS…PAPELRASFL (74 aa)) are disordered. A compositionally biased stretch (low complexity) spans 832–845 (LHSQNSLSPRSSLS). A disordered region spans residues 946-980 (LSREGQPIPESGDPKGTPKSDAEPEPGNLSEKVSH). Positions 957 to 967 (GDPKGTPKSDA) are enriched in basic and acidic residues. A coiled-coil region spans residues 972–1034 (GNLSEKVSHL…TRLLLASKQL (63 aa)).

As to quaternary structure, interacts with RRP1B; the interaction leads to inhibition of SIPA1 GTPase activity. Expressed in fetal as well as in adult tissues. Expressed abundantly in the lymphoid tissues such as thymus, spleen and peripheral blood lymphocytes and also shows a significant expression in the spinal cord.

It localises to the nucleus. The protein resides in the cytoplasm. The protein localises to the perinuclear region. It is found in the endomembrane system. Its function is as follows. GTPase activator for the nuclear Ras-related regulatory proteins Rap1 and Rap2 in vitro, converting them to the putatively inactive GDP-bound state. Affects cell cycle progression. The polypeptide is Signal-induced proliferation-associated protein 1 (SIPA1) (Homo sapiens (Human)).